The following is a 654-amino-acid chain: Carboxypeptidase Z (654 aa).

An N-terminal signal peptide occupies residues 1-20 (MPTMPLLLAALAALAVLALA). Residues 43–165 (THSATCVDLH…APEEEGCYDP (123 aa)) form the FZ domain. 5 cysteine pairs are disulfide-bonded: C48–C114, C56–C107, C98–C134, C123–C162, and C127–C151. N62 is a glycosylation site (N-linked (GlcNAc...) asparagine). The region spanning 191–507 (AHHSYAQMVR…EPLLNFLEMV (317 aa)) is the Peptidase M14 domain. H253 and E256 together coordinate Zn(2+). Residue N286 is glycosylated (N-linked (GlcNAc...) asparagine). H385 contributes to the Zn(2+) binding site. E477 serves as the catalytic Proton donor/acceptor. Positions 596 to 630 (FLPGPSRALPRFQDPQREPTQMDFEPPRARRQPAS) are disordered.

Belongs to the peptidase M14 family. Zn(2+) is required as a cofactor.

It localises to the secreted. The protein resides in the extracellular space. The protein localises to the extracellular matrix. Inhibited by 2-mercaptomethyl-3-guanidinoethylthiopropanoic acid (MGTA) and guanidinoethylmercaptosuccinic acid (GEMSA). Inhibited by chelating agents such as EDTA and EGTA. Functionally, cleaves substrates with C-terminal arginine residues. Probably modulates the Wnt signaling pathway, by cleaving some undefined protein. May play a role in cleavage during prohormone processing. The chain is Carboxypeptidase Z (Cpz) from Mus musculus (Mouse).